Reading from the N-terminus, the 135-residue chain is Large ribosomal subunit protein uL16c (135 aa).

It belongs to the universal ribosomal protein uL16 family. As to quaternary structure, part of the 50S ribosomal subunit.

It localises to the plastid. The protein resides in the chloroplast. This is Large ribosomal subunit protein uL16c from Lepidium virginicum (Virginia pepperweed).